A 127-amino-acid chain; its full sequence is MVEVEHWNTLRLRIYIGENDRWEGKPLYKAIVEKLREMGIAGATVYRGIYGFGKKSRIHSSDVLRLSTDLPIVIEVVDRGHNIEKAVNVIKPMIKDGMITVEPTIVLWVGSKEEIKKFEEDAIAERR.

The protein belongs to the UPF0166 family.

This is UPF0166 protein PYRAB06660 from Pyrococcus abyssi (strain GE5 / Orsay).